The following is a 199-amino-acid chain: Thymidine kinase (199 aa).

Residues 15–22 (GSMFSGKS) and 88–91 (DEVQ) each bind ATP. Glutamate 89 functions as the Proton acceptor in the catalytic mechanism. 4 residues coordinate Zn(2+): cysteine 145, cysteine 148, cysteine 183, and histidine 186.

The protein belongs to the thymidine kinase family. As to quaternary structure, homotetramer.

It is found in the cytoplasm. It carries out the reaction thymidine + ATP = dTMP + ADP + H(+). In Staphylococcus aureus (strain USA300), this protein is Thymidine kinase.